The sequence spans 565 residues: DNA repair protein RAD7 (565 aa).

2 disordered regions span residues 1–22 (MYRSRNRPKRGGENEVKGPNSA) and 41–68 (WYQRQSKKQEDATDEKKGKAEDDSFTAE). Positions 1-200 (MYRSRNRPKR…SKLVFNKLRD (200 aa)) are hydrophilic. Positions 47-62 (KKQEDATDEKKGKAED) are enriched in basic and acidic residues. Phosphoserine is present on residues Ser-64 and Ser-85. Residues 105–137 (ADSDEEEYETSHISDTPVSLSSANDRESLTKKR) form a disordered region. A compositionally biased stretch (polar residues) spans 115–127 (SHISDTPVSLSSA).

To S.pombe SpCC613.14. Component of the global genome repair (GGR) complex composed of at least ABF1, RAD7 and RAD16. Interacts with ELC1.

Component of the global genome repair (GGR) complex which promotes global genome nucleotide excision repair (GG-NER) which removes DNA damage from nontranscribing DNA. This protein is one of 10 proteins (RAD1, 2,3,4,7,10,14, 16,23 and MMS19) involved in excision repair of DNA damaged with UV light, bulky adducts, or cross-linking agents. In Saccharomyces cerevisiae (strain ATCC 204508 / S288c) (Baker's yeast), this protein is DNA repair protein RAD7 (RAD7).